The chain runs to 252 residues: Triosephosphate isomerase (252 aa).

10–12 (NWK) serves as a coordination point for substrate. His-96 serves as the catalytic Electrophile. Catalysis depends on Glu-168, which acts as the Proton acceptor. Substrate is bound by residues Gly-174, Ser-214, and 235-236 (GG).

It belongs to the triosephosphate isomerase family. In terms of assembly, homodimer.

It localises to the cytoplasm. The enzyme catalyses D-glyceraldehyde 3-phosphate = dihydroxyacetone phosphate. Its pathway is carbohydrate biosynthesis; gluconeogenesis. It functions in the pathway carbohydrate degradation; glycolysis; D-glyceraldehyde 3-phosphate from glycerone phosphate: step 1/1. Involved in the gluconeogenesis. Catalyzes stereospecifically the conversion of dihydroxyacetone phosphate (DHAP) to D-glyceraldehyde-3-phosphate (G3P). The polypeptide is Triosephosphate isomerase (Streptococcus mutans serotype c (strain ATCC 700610 / UA159)).